A 1378-amino-acid chain; its full sequence is DNA-directed RNA polymerase subunit beta (1378 aa).

This sequence belongs to the RNA polymerase beta chain family. In terms of assembly, the RNAP catalytic core consists of 2 alpha, 1 beta, 1 beta' and 1 omega subunit. When a sigma factor is associated with the core the holoenzyme is formed, which can initiate transcription.

It catalyses the reaction RNA(n) + a ribonucleoside 5'-triphosphate = RNA(n+1) + diphosphate. Functionally, DNA-dependent RNA polymerase catalyzes the transcription of DNA into RNA using the four ribonucleoside triphosphates as substrates. This is DNA-directed RNA polymerase subunit beta from Mesorhizobium japonicum (strain LMG 29417 / CECT 9101 / MAFF 303099) (Mesorhizobium loti (strain MAFF 303099)).